A 183-amino-acid chain; its full sequence is Peptide deformylase-like (183 aa).

The active site involves E140.

It belongs to the polypeptide deformylase family.

The polypeptide is Peptide deformylase-like (Rickettsia conorii (strain ATCC VR-613 / Malish 7)).